Reading from the N-terminus, the 374-residue chain is Phospho-2-dehydro-3-deoxyheptonate aldolase AMT16 (374 aa).

It belongs to the class-I DAHP synthase family.

The catalysed reaction is D-erythrose 4-phosphate + phosphoenolpyruvate + H2O = 7-phospho-2-dehydro-3-deoxy-D-arabino-heptonate + phosphate. The protein operates within mycotoxin biosynthesis. In terms of biological role, nonribosomal peptide synthetase; part of the gene clusters that mediate the biosynthesis of AM-toxins, host-selective toxins (HSTs) causing Alternaria blotch on apple, a worldwide distributed disease. AM-toxins are cyclic depsipeptides containing the 3 residues 2-hydroxy-isovaleric acid (2-HIV), dehydroalanine, L-alanine which are common for all 3 AM-toxins I to III. The fourth precursor is L-alpha-amino-methoxyphenyl-valeric acid (L-Amv) for AM-toxin I, L-alpha-amino-phenyl-valeric acid (L-Apv) for AM-toxin II, and L-alpha-amino-hydroxyphenyl-valeric acid (L-Ahv) for AM-toxin III. AM-toxins have two target sites for affecting susceptible apple cells; they cause invagination of the plasma membrane and electrolyte loss and chloroplast disorganization. The non-ribosomal peptide synthetase AMT1 contains 4 catalytic modules and is responsible for activation of each residue in AM-toxin. The aldo-keto reductase AMT2 catalyzes the conversion of 2-keto-isovaleric acid (2-KIV) to 2-hydroxy-isovaleric acid (2-HIV), one of the precursor residues incorporated by AMT1 during AM-toxin biosynthesis, by reduction of its ketone to an alcohol. The cytochrome P450 monooxygenase AMT3 and the thioesterase AMT4 are also important for AM-toxin production, but their exact function within the AM-toxin biosynthesis are not known yet. Up to 21 proteins (including AMT1 to AMT4) are predicted to be involved in AM-toxin biosynthesis since their expression ishighly up-regulated in AM-toxin-producing cultures. The protein is Phospho-2-dehydro-3-deoxyheptonate aldolase AMT16 of Alternaria alternata (Alternaria rot fungus).